Consider the following 218-residue polypeptide: MDKSESTSAGRNRRRRPRRGSRSAPSSADANFRVLSQQLSRLNKTLAAGRPTINHPTFVGSERCKPGYTFSSITLKPPKIDRGSYYGKRLLLPDSVTEFDKKLVSRIQIRVNPLPKFDSTVWVTVRKVPASSDLSVAAISAMFADGASPVLVNQYAASGVQANNKLLYDLSAMRADIGDMRKYAVLVYSKDDALETDELVLHVDIEHQRIPTSGVLPV.

N-acetylmethionine; by host is present on Met1. The segment at 1 to 28 (MDKSESTSAGRNRRRRPRRGSRSAPSSA) is disordered. Residues 11 to 21 (RNRRRRPRRGS) show a composition bias toward basic residues.

It belongs to the cucumovirus capsid protein family.

It localises to the virion. In terms of biological role, capsid protein. Probably binds RNA and plays a role in packaging. This Cucumis sativus (Cucumber) protein is Capsid protein.